We begin with the raw amino-acid sequence, 302 residues long: Urease accessory protein UreD 2 (302 aa).

The protein belongs to the UreD family. As to quaternary structure, ureD, UreF and UreG form a complex that acts as a GTP-hydrolysis-dependent molecular chaperone, activating the urease apoprotein by helping to assemble the nickel containing metallocenter of UreC. The UreE protein probably delivers the nickel.

Its subcellular location is the cytoplasm. Its function is as follows. Required for maturation of urease via the functional incorporation of the urease nickel metallocenter. The polypeptide is Urease accessory protein UreD 2 (Brucella canis (strain ATCC 23365 / NCTC 10854 / RM-666)).